A 443-amino-acid polypeptide reads, in one-letter code: uncharacterized protein (443 aa).

Helical transmembrane passes span 15 to 35 (IYAG…DGLA), 38 to 58 (LGMA…GPGS), 59 to 79 (AWQG…LSWL), and 181 to 201 (VVTA…IPAL). The tract at residues 231–270 (NFGIGNIGNANLGNGNIGNANLGSGNAGFFNFGNGNDGNT) is 4 X 10 AA approximate repeats.

This sequence belongs to the mycobacterial PPE family.

It is found in the cell membrane. This is an uncharacterized protein from Mycobacterium tuberculosis (strain ATCC 25618 / H37Rv).